The chain runs to 373 residues: MRAKIPSEEVAVKLNEWYKLIRAFEADQAEALKQEIEYDLEDMEENQDLLLYFSLMEFRHRIMLDKLMPVKDSDTKPPFSDMLNEIESNQQKLTGLLEYYFYYFRGMYEFKQKNFILAIDHYKHAEEKLEYVEDEIEKAEFLFKVAEVYYHIKQTYFSMNYASQALDIYTKYELYGRRRVQCEFIIAGNLTDVYHHEKALTHLCSALEHARQLEEAYMIAAAYYNVGHCKYSLGDYKEAEGYFKTAAAIFEEHNFQQAVQAVFSLTHIYCKEGKYDKAVEAYDRGIKSAAEWEDDMYLTKFRLIHELYLGSGDLNVLTECFDLLESRQLLADAEDLLHDTAERFNQLEHYESAAFFYRRLMNIKKKLAEQRFQ.

TPR repeat units follow at residues tyrosine 99–glutamate 135 and alanine 146–arginine 179. Residues glutamate 147, tyrosine 150, glutamine 181, aspartate 192, tyrosine 217, asparagine 225, histidine 228, glutamine 260, tyrosine 297, lysine 300, and aspartate 335 each coordinate L-glutamyl-L-arginyl-glycyl-L-methionyl-L-threonine. TPR repeat units follow at residues alanine 220–histidine 253 and valine 259–tryptophan 292. One copy of the TPR 5 repeat lies at glutamate 334 to leucine 367.

The protein belongs to the Rap family. In terms of assembly, monomer in solution. Homodimer.

It localises to the cytoplasm. Its activity is regulated as follows. Inhibited in vitro by the competence and sporulation stimulating factor (CSF), encoded by phrC. However, CSF has at least three targets (RapB, RapC, and RapJ) and the physiological importance of RapJ inhibition by CSF is unknown. Interaction with CSF induces a conformational change in RapJ. Functionally, involved in the regulation of sporulation. Acts as a phosphatase that specifically dephosphorylates the sporulation initiation phosphotransferase Spo0F and inhibits its activity. This Bacillus subtilis (strain 168) protein is Response regulator aspartate phosphatase J (rapJ).